Consider the following 104-residue polypeptide: L-rhamnose mutarotase (104 aa).

Position 18 (Y18) interacts with substrate. Residue H22 is the Proton donor of the active site. Substrate-binding positions include Y41 and 76–77; that span reads WW.

This sequence belongs to the rhamnose mutarotase family. As to quaternary structure, homodimer.

Its subcellular location is the cytoplasm. It carries out the reaction alpha-L-rhamnose = beta-L-rhamnose. It functions in the pathway carbohydrate metabolism; L-rhamnose metabolism. Its function is as follows. Involved in the anomeric conversion of L-rhamnose. The polypeptide is L-rhamnose mutarotase (Salmonella heidelberg (strain SL476)).